A 185-amino-acid polypeptide reads, in one-letter code: Ribosome-recycling factor (185 aa).

This sequence belongs to the RRF family.

It localises to the cytoplasm. Responsible for the release of ribosomes from messenger RNA at the termination of protein biosynthesis. May increase the efficiency of translation by recycling ribosomes from one round of translation to another. The chain is Ribosome-recycling factor from Bacillus anthracis (strain CDC 684 / NRRL 3495).